We begin with the raw amino-acid sequence, 157 residues long: Transcriptional repressor NrdR (157 aa).

Residues 1–26 (MRCPKCGGSKSSVIDSRQAEDGNTIR) are disordered. A zinc finger lies at 3–34 (CPKCGGSKSSVIDSRQAEDGNTIRRRRECEDC). A compositionally biased stretch (basic and acidic residues) spans 17–26 (RQAEDGNTIR). The region spanning 49–139 (LVVVKKDGTR…VYRSFKDVGE (91 aa)) is the ATP-cone domain.

Belongs to the NrdR family. It depends on Zn(2+) as a cofactor.

Functionally, negatively regulates transcription of bacterial ribonucleotide reductase nrd genes and operons by binding to NrdR-boxes. The protein is Transcriptional repressor NrdR of Streptococcus gordonii (strain Challis / ATCC 35105 / BCRC 15272 / CH1 / DL1 / V288).